Consider the following 309-residue polypeptide: Fructosamine-3-kinase (309 aa).

Met1 is modified (N-acetylmethionine). 89 to 91 serves as a coordination point for ATP; sequence EHL. Asp217 acts as the Proton acceptor in catalysis.

The protein belongs to the fructosamine kinase family. Monomer. As to expression, widely expressed. Expressed in erythrocytes.

The catalysed reaction is N(6)-(D-fructosyl)-L-lysyl-[protein] + ATP = N(6)-(3-O-phospho-D-fructosyl)-L-lysyl-[protein] + ADP + H(+). It catalyses the reaction N(6)-D-ribulosyl-L-lysyl-[protein] + ATP = N(6)-(3-O-phospho-D-ribulosyl)-L-lysyl-[protein] + ADP + H(+). The enzyme catalyses N(6)-(D-psicosyl)-L-lysyl-[protein] + ATP = N(6)-(3-O-phospho-D-psicosyl)-L-lysyl-[protein] + ADP + H(+). Functionally, fructosamine-3-kinase involved in protein deglycation by mediating phosphorylation of fructoselysine residues on glycated proteins, to generate fructoselysine-3 phosphate. Fructoselysine-3 phosphate adducts are unstable and decompose under physiological conditions. Involved in intracellular deglycation in erythrocytes. Involved in the response to oxidative stress by mediating deglycation of NFE2L2/NRF2, glycation impairing NFE2L2/NRF2 function. Also able to phosphorylate psicosamines and ribulosamines. This chain is Fructosamine-3-kinase, found in Homo sapiens (Human).